Reading from the N-terminus, the 205-residue chain is Small ribosomal subunit protein uS4 (205 aa).

Residues 94 to 172 enclose the S4 RNA-binding domain; that stretch reads SRLDSIVYRM…TTPDYVSFDV (79 aa).

It belongs to the universal ribosomal protein uS4 family. In terms of assembly, part of the 30S ribosomal subunit. Contacts protein S5. The interaction surface between S4 and S5 is involved in control of translational fidelity.

One of the primary rRNA binding proteins, it binds directly to 16S rRNA where it nucleates assembly of the body of the 30S subunit. Functionally, with S5 and S12 plays an important role in translational accuracy. The sequence is that of Small ribosomal subunit protein uS4 from Rickettsia bellii (strain OSU 85-389).